The sequence spans 528 residues: MALEVLEALDSARTQWYHVTAIVIAGMGFFTDAYDLFCITTVSKLLGRLYYFDPSTGKPGKLPNNVNNLVTGVALVGTLSGQLFFGYLGDKLGRKKVYGVTLILMVACAICSGLSFGASAKSVMGTLCFFRFWLGFGIGGDYPLSATIMSEYANKRTRGAFIAAVFAMQGVGIIFAGLVSMCLSAGFKASYHAPSFHDDPIMSTQPQGDLMWRLVLMIGAVPAAMTYYWRMKMPETGRYTAIIEGNAKQAAADMARVLDIEIQAEQDKLAEFKAANDYPLWSNEFFTRHGRHLIGTMTSWFLLDIAFYSQNLTQKDIFPAMGLIDKDFEMNAIQEVFETSRAMFVIALFGTFPGYWFTVFFIEKLGRYKIQLIGFFMMSVFMFIIGVKYDYLRNENSHMFALLYGLTFFFANFGPNSTTFVLPAELFPTRVRSTCHALSAAAGKAGAMVGAFGIQNYTQKGEQKQIKHAMMILAVTNLIGFFCSFLVTETKGRSLEEISGEDGRESELTPTPPNNRVPTRQEPRSETM.

At 1-18 (MALEVLEALDSARTQWYH) the chain is on the cytoplasmic side. The chain crosses the membrane as a helical span at residues 19–39 (VTAIVIAGMGFFTDAYDLFCI). Topologically, residues 40–68 (TTVSKLLGRLYYFDPSTGKPGKLPNNVNN) are extracellular. A helical transmembrane segment spans residues 69–89 (LVTGVALVGTLSGQLFFGYLG). Residues 90-96 (DKLGRKK) lie on the Cytoplasmic side of the membrane. Residues 97-117 (VYGVTLILMVACAICSGLSFG) form a helical membrane-spanning segment. The Extracellular portion of the chain corresponds to 118-122 (ASAKS). Residues 123–143 (VMGTLCFFRFWLGFGIGGDYP) traverse the membrane as a helical segment. Over 144–158 (LSATIMSEYANKRTR) the chain is Cytoplasmic. The helical transmembrane segment at 159–179 (GAFIAAVFAMQGVGIIFAGLV) threads the bilayer. Topologically, residues 180–208 (SMCLSAGFKASYHAPSFHDDPIMSTQPQG) are extracellular. A helical membrane pass occupies residues 209-229 (DLMWRLVLMIGAVPAAMTYYW). Residues 230 to 292 (RMKMPETGRY…NEFFTRHGRH (63 aa)) are Cytoplasmic-facing. A helical membrane pass occupies residues 293–313 (LIGTMTSWFLLDIAFYSQNLT). Residues 314 to 341 (QKDIFPAMGLIDKDFEMNAIQEVFETSR) are Extracellular-facing. The chain crosses the membrane as a helical span at residues 342-362 (AMFVIALFGTFPGYWFTVFFI). At 363–371 (EKLGRYKIQ) the chain is on the cytoplasmic side. Residues 372–392 (LIGFFMMSVFMFIIGVKYDYL) form a helical membrane-spanning segment. At 393–401 (RNENSHMFA) the chain is on the extracellular side. The helical transmembrane segment at 402–422 (LLYGLTFFFANFGPNSTTFVL) threads the bilayer. Residues 423–433 (PAELFPTRVRS) are Cytoplasmic-facing. The chain crosses the membrane as a helical span at residues 434–454 (TCHALSAAAGKAGAMVGAFGI). Residues 455–467 (QNYTQKGEQKQIK) are Extracellular-facing. An N-linked (GlcNAc...) asparagine glycan is attached at asparagine 456. A helical transmembrane segment spans residues 468 to 488 (HAMMILAVTNLIGFFCSFLVT). The Cytoplasmic portion of the chain corresponds to 489-528 (ETKGRSLEEISGEDGRESELTPTPPNNRVPTRQEPRSETM). 2 stretches are compositionally biased toward basic and acidic residues: residues 496-507 (EEISGEDGRESE) and 519-528 (TRQEPRSETM). The interval 496 to 528 (EEISGEDGRESELTPTPPNNRVPTRQEPRSETM) is disordered.

This sequence belongs to the major facilitator superfamily. Phosphate:H(+) symporter (TC 2.A.1.9) family. As to expression, expressed only in mycorrhizal roots, exclusively in cortical cells containing arbuscules, upon arbuscular mycorrhizal (AM) symbiosis with AM fungi (e.g. Gigaspora margarita and Funnelliformis mosseae). Also observed in root tips of non-mycorrhizal roots, in a phosphate (Pi) depended-manner, highest expression levels being observed in low Pi conditions.

It is found in the cell membrane. It carries out the reaction phosphate(in) + H(+)(in) = phosphate(out) + H(+)(out). Its function is as follows. Low-affinity transporter for external inorganic phosphate (Pi) probably involved in the acquisition of phosphate released by arbuscular mycorrhizal (AM) fungi (e.g. Gigaspora margarita and Funnelliformis mosseae) during AM symbiosis; required for propper mycorrhizal arbuscule morphology. Acts as a Pi-sensing machinery at the root tip level, independently of AM fungi, involved in the regulation of early root branching and lateral roots formation. The sequence is that of Low affinity inorganic phosphate transporter 4 from Lotus japonicus (Lotus corniculatus var. japonicus).